Here is a 550-residue protein sequence, read N- to C-terminus: Glucose-6-phosphate isomerase (550 aa).

Catalysis depends on Glu-356, which acts as the Proton donor. Active-site residues include His-387 and Lys-515.

The protein belongs to the GPI family.

The protein localises to the cytoplasm. It carries out the reaction alpha-D-glucose 6-phosphate = beta-D-fructose 6-phosphate. Its pathway is carbohydrate biosynthesis; gluconeogenesis. The protein operates within carbohydrate degradation; glycolysis; D-glyceraldehyde 3-phosphate and glycerone phosphate from D-glucose: step 2/4. Functionally, catalyzes the reversible isomerization of glucose-6-phosphate to fructose-6-phosphate. The polypeptide is Glucose-6-phosphate isomerase (Vibrio atlanticus (strain LGP32) (Vibrio splendidus (strain Mel32))).